Reading from the N-terminus, the 928-residue chain is MVQIPQNPLILVDGSSYLYRAYHAFPPLTNSAGEPTGAMYGVLNMLRSLIMQYKPTHAAVVFDAKGKTFRDELFEHYKSHRPPMPDDLRAQIEPLHAMVKAMGLPLLAVSGVEADDVIGTLAREAEKAGRPVLISTGDKDMAQLVTPNITLINTMTNTILGPEEVVNKYGVPPELIIDFLALMGDSSDNIPGVPGVGEKTAQALLQGLGGLDTLYAEPEKIAGLSFRGAKTMAAKLEQNKEVAYLSYQLATIKTDVELELTCEQLEVQQPAAEELLGLFKKYEFKRWTADVEAGKWLQAKGAKPAAKPQETSVADEAPEVTATVISYDNYVTILDEETLKAWIAKLEKAPVFAFDTETDSLDNISANLVGLSFAIEPGVAAYIPVAHDYLDAPDQISRERALELLKPLLEDEKALKVGQNLKYDRGILANYGIELRGIAFDTMLESYILNSVAGRHDMDSLAERWLKHKTITFEEIAGKGKNQLTFNQIALEEAGRYAAEDADVTLQLHLKMWPDLQKHKGPLNVFENIEMPLVPVLSRIERNGVKIDPKVLHNHSEELTLRLAELEKKAHEIAGEEFNLSSTKQLQTILFEKQGIKPLKKTPGGAPSTSEEVLEELALDYPLPKVILEYRGLAKLKSTYTDKLPLMINPKTGRVHTSYHQAVTATGRLSSTDPNLQNIPVRNEEGRRIRQAFIAPEDYVIVSADYSQIELRIMAHLSRDKGLLTAFAEGKDIHRATAAEVFGLPLETVTSEQRRSAKAINFGLIYGMSAFGLARQLNIPRKEAQKYMDLYFERYPGVLEYMERTRAQAKEQGYVETLDGRRLYLPDIKSSNGARRAAAERAAINAPMQGTAADIIKRAMIAVDAWLQAEQPRVRMIMQVHDELVFEVHKDDVDAVAKQIHQLMENCTRLDVPLLVEVGSGENWDQAH.

The 5'-3' exonuclease domain maps to 1 to 323 (MVQIPQNPLI…ADEAPEVTAT (323 aa)). Residues 324 to 517 (VISYDNYVTI…LHLKMWPDLQ (194 aa)) enclose the 3'-5' exonuclease domain. Positions 324–928 (VISYDNYVTI…GSGENWDQAH (605 aa)) are klenow fragment. The segment at 521–928 (GPLNVFENIE…GSGENWDQAH (408 aa)) is polymerase.

Belongs to the DNA polymerase type-A family. As to quaternary structure, single-chain monomer with multiple functions.

The enzyme catalyses DNA(n) + a 2'-deoxyribonucleoside 5'-triphosphate = DNA(n+1) + diphosphate. In terms of biological role, in addition to polymerase activity, this DNA polymerase exhibits 3'-5' and 5'-3' exonuclease activity. It is able to utilize nicked circular duplex DNA as a template and can unwind the parental DNA strand from its template. Genetic interactions among priB, dam, lexA, nagC, polA, rdgB, rdgB, rep and uup link the PriA-PriB replication restart pathway to DNA double-strand break repair. The protein is DNA polymerase I (polA) of Escherichia coli (strain K12).